The chain runs to 41 residues: Probable cinnamyl alcohol dehydrogenase 2 (41 aa).

It belongs to the zinc-containing alcohol dehydrogenase family. Requires Zn(2+) as cofactor.

The catalysed reaction is (E)-cinnamyl alcohol + NADP(+) = (E)-cinnamaldehyde + NADPH + H(+). It carries out the reaction (E)-coniferol + NADP(+) = (E)-coniferaldehyde + NADPH + H(+). It catalyses the reaction (E)-sinapyl alcohol + NADP(+) = (E)-sinapaldehyde + NADPH + H(+). The enzyme catalyses (E)-4-coumaroyl alcohol + NADP(+) = (E)-4-coumaraldehyde + NADPH + H(+). The catalysed reaction is (E)-caffeyl alcohol + NADP(+) = (E)-caffeyl aldehyde + NADPH + H(+). Its pathway is aromatic compound metabolism; phenylpropanoid biosynthesis. In terms of biological role, involved in lignin biosynthesis. Catalyzes the final step specific for the production of lignin monomers, like coniferyl alcohol, sinapyl alcohol and 4-coumaryl alcohol. This chain is Probable cinnamyl alcohol dehydrogenase 2, found in Pseudotsuga menziesii (Douglas-fir).